Here is a 723-residue protein sequence, read N- to C-terminus: tRNA (guanine(27)-N(2))-dimethyltransferase (723 aa).

Over residues 1 to 10 (MENMAEEELL) the composition is skewed to acidic residues. The tract at residues 1 to 72 (MENMAEEELL…SLASVPEEAE (72 aa)) is disordered. At threonine 23 the chain carries Phosphothreonine. The segment covering 32-44 (PAADTALDSAPTP) has biased composition (low complexity). Pro residues predominate over residues 45-59 (DSAPAPALAPAPAPA). The residue at position 61 (serine 61) is a Phosphoserine. Positions 128–132 (HKLRR) match the Nucleolar localization signal motif. The C2H2-type zinc-finger motif lies at 177-199 (YHCIICSATITRRTDMLGHVKRH). Residues 220–679 (EVLKETDTDI…ASLTQFKSIL (460 aa)) form the Trm1 methyltransferase domain. S-adenosyl-L-methionine contacts are provided by arginine 253, aspartate 300, aspartate 348, and alanine 349. Zn(2+) contacts are provided by cysteine 479, cysteine 482, cysteine 504, and cysteine 506. Residue lysine 576 forms a Glycyl lysine isopeptide (Lys-Gly) (interchain with G-Cter in SUMO2) linkage. Serine 603 carries the phosphoserine modification.

This sequence belongs to the class I-like SAM-binding methyltransferase superfamily. Trm1 family.

It localises to the nucleus. The protein localises to the nucleolus. The catalysed reaction is guanosine(27) in tRNA(Tyr) + 2 S-adenosyl-L-methionine = N(2)-dimethylguanosine(27) in tRNA(Tyr) + 2 S-adenosyl-L-homocysteine + 2 H(+). In terms of biological role, specifically dimethylates a single guanine residue at position 27 of tRNA(Tyr) using S-adenosyl-L-methionine as donor of the methyl groups. Dimethylation at position 27 of tRNA(Tyr) is required for efficient translation of tyrosine codons. Also required to maintain 3-(3-amino-3-carboxypropyl)uridine (acp3U) in the D-loop of several cytoplasmic tRNAs. The protein is tRNA (guanine(27)-N(2))-dimethyltransferase of Rattus norvegicus (Rat).